The following is a 475-amino-acid chain: Tubulin epsilon chain (475 aa).

148–154 (GGGTGSG) serves as a coordination point for GTP.

This sequence belongs to the tubulin family. Found in a complex with TEDC1, TEDC2, TUBE1 and TUBD1.

The protein resides in the cytoplasm. Its subcellular location is the cytoskeleton. The protein localises to the microtubule organizing center. It is found in the centrosome. The protein is Tubulin epsilon chain (TUBE1) of Homo sapiens (Human).